Here is a 243-residue protein sequence, read N- to C-terminus: Large ribosomal subunit protein uL3 (243 aa).

2 disordered regions span residues 139 to 164 and 218 to 243; these read VSHR…KMPG and KPGK…GEGA. Gln-151 carries the N5-methylglutamine modification. Basic and acidic residues predominate over residues 218–229; the sequence is KPGKFKLADGGD. The segment covering 230 to 243 has biased composition (low complexity); that stretch reads KAAAAPEATAGEGA.

It belongs to the universal ribosomal protein uL3 family. In terms of assembly, part of the 50S ribosomal subunit. Forms a cluster with proteins L14 and L19. In terms of processing, methylated by PrmB.

Its function is as follows. One of the primary rRNA binding proteins, it binds directly near the 3'-end of the 23S rRNA, where it nucleates assembly of the 50S subunit. The protein is Large ribosomal subunit protein uL3 of Afipia carboxidovorans (strain ATCC 49405 / DSM 1227 / KCTC 32145 / OM5) (Oligotropha carboxidovorans).